Consider the following 441-residue polypeptide: Ribosomal protein uS12 methylthiotransferase RimO (441 aa).

Residues 8-118 (PKIGFVSLGC…VLEHVHHYVP (111 aa)) enclose the MTTase N-terminal domain. 6 residues coordinate [4Fe-4S] cluster: C17, C53, C82, C150, C154, and C157. The Radical SAM core domain maps to 136-373 (LTPRHYAYLK…MQLQQQISAE (238 aa)). The region spanning 376–441 (QEKVGREILV…DEYDLWGSRV (66 aa)) is the TRAM domain.

Belongs to the methylthiotransferase family. RimO subfamily. It depends on [4Fe-4S] cluster as a cofactor.

Its subcellular location is the cytoplasm. It carries out the reaction L-aspartate(89)-[ribosomal protein uS12]-hydrogen + (sulfur carrier)-SH + AH2 + 2 S-adenosyl-L-methionine = 3-methylsulfanyl-L-aspartate(89)-[ribosomal protein uS12]-hydrogen + (sulfur carrier)-H + 5'-deoxyadenosine + L-methionine + A + S-adenosyl-L-homocysteine + 2 H(+). Catalyzes the methylthiolation of an aspartic acid residue of ribosomal protein uS12. In Shigella boydii serotype 18 (strain CDC 3083-94 / BS512), this protein is Ribosomal protein uS12 methylthiotransferase RimO.